Consider the following 601-residue polypeptide: Pyranose 2-oxidase (601 aa).

His-151 carries the post-translational modification Tele-8alpha-FAD histidine. Residues Gln-406 and His-408 each coordinate substrate. His-505 (proton acceptor) is an active-site residue. Residue Asn-558 is part of the active site. Residues 577–601 (KLGKKGSHSGNRDDGDVDTDTDDDA) form a disordered region. Over residues 591 to 601 (GDVDTDTDDDA) the composition is skewed to acidic residues.

This sequence belongs to the GMC oxidoreductase family. In terms of assembly, homotetramer. Requires FAD as cofactor.

The catalysed reaction is D-glucose + O2 = 2-dehydro-D-glucose + H2O2. In terms of biological role, catalyzes the oxidation of various aldopyranoses and disaccharides on carbon-2 to the corresponding 2-keto sugars concomitant with the reduction of O(2) to H(2)O(2). This chain is Pyranose 2-oxidase (p2ox), found in Emericella nidulans (strain FGSC A4 / ATCC 38163 / CBS 112.46 / NRRL 194 / M139) (Aspergillus nidulans).